A 115-amino-acid polypeptide reads, in one-letter code: UPF0102 protein NGO_1987 (115 aa).

It belongs to the UPF0102 family.

This is UPF0102 protein NGO_1987 from Neisseria gonorrhoeae (strain ATCC 700825 / FA 1090).